The chain runs to 142 residues: Type 3 secretion system pilotin (142 aa).

The signal sequence occupies residues 1 to 23; the sequence is MIRHGSNKLKIFILSILLLTLSG. The N-palmitoyl cysteine moiety is linked to residue Cys24. Residue Cys24 is the site of S-diacylglycerol cysteine attachment.

This sequence belongs to the MxiM family. Monomer. Interacts with the secretin MxiD/SctC.

The protein localises to the cell outer membrane. Its function is as follows. Involved in the synthesis of the type III secretion system (T3SS), also called injectisome, which is used to inject bacterial effector proteins into eukaryotic host cells. Pilot protein that is required for the proper localization of the secretin MxiD/SctC in the outer membrane. Also influences both MxiD/SctC multimerization and stability. Required for both Ipa translocation and tissue culture cell invasion. Binds lipids. The protein is Type 3 secretion system pilotin of Shigella flexneri.